Here is a 346-residue protein sequence, read N- to C-terminus: Phosphate acyltransferase (346 aa).

Belongs to the PlsX family. Homodimer. Probably interacts with PlsY.

The protein localises to the cytoplasm. It carries out the reaction a fatty acyl-[ACP] + phosphate = an acyl phosphate + holo-[ACP]. It participates in lipid metabolism; phospholipid metabolism. Catalyzes the reversible formation of acyl-phosphate (acyl-PO(4)) from acyl-[acyl-carrier-protein] (acyl-ACP). This enzyme utilizes acyl-ACP as fatty acyl donor, but not acyl-CoA. This is Phosphate acyltransferase from Brucella abortus (strain S19).